A 475-amino-acid chain; its full sequence is Tetratricopeptide repeat protein 29 (475 aa).

TPR repeat units follow at residues 92–131, 136–173, 182–215, 234–267, 274–307, 314–347, and 354–387; these read DALR…EDAE, FEDV…AQLI, AEAH…TQGR, LRTY…AKEG, AEAS…STDL, GRGY…ARNN, and VRAS…TVEL. The disordered stretch occupies residues 437–475; sequence IEPDPVTEEFRGSTVEAVSQNSERLEELSRFPGDQKNET. The span at 459–475 shows a compositional bias: basic and acidic residues; it reads ERLEELSRFPGDQKNET.

In terms of tissue distribution, expressed in spermatozoa (at protein level).

Its subcellular location is the cytoplasm. The protein localises to the cytoskeleton. It is found in the flagellum axoneme. Functionally, axonemal protein which is implicated in axonemal and/or peri-axonemal structure assembly and regulates flagellum assembly and beating and therefore sperm motility. The sequence is that of Tetratricopeptide repeat protein 29 (TTC29) from Homo sapiens (Human).